The primary structure comprises 276 residues: Probable endonuclease 4 (276 aa).

Residues histidine 65, histidine 105, glutamate 141, aspartate 175, histidine 178, histidine 210, aspartate 223, histidine 225, and glutamate 255 each coordinate Zn(2+).

The protein belongs to the AP endonuclease 2 family. Requires Zn(2+) as cofactor.

The catalysed reaction is Endonucleolytic cleavage to 5'-phosphooligonucleotide end-products.. In terms of biological role, endonuclease IV plays a role in DNA repair. It cleaves phosphodiester bonds at apurinic or apyrimidinic (AP) sites, generating a 3'-hydroxyl group and a 5'-terminal sugar phosphate. This is Probable endonuclease 4 from Symbiobacterium thermophilum (strain DSM 24528 / JCM 14929 / IAM 14863 / T).